Consider the following 215-residue polypeptide: Adenylate kinase (215 aa).

10–15 is an ATP binding site; it reads GTGKGT. The tract at residues 30–59 is NMP; that stretch reads STGHILRKISTKKTLFGEKIKNIINSGKLV. Residues Thr31, Arg36, 57 to 59, 85 to 88, and Gln92 contribute to the AMP site; these read KLV and GFPR. The LID stretch occupies residues 122–157; the sequence is TRTINPITGTIYNNVIQKNSELKNLKINTLKSRLDD. ATP contacts are provided by residues Arg123 and 132–133; that span reads IY. Residues Arg154 and Arg165 each contribute to the AMP site. Asn198 contacts ATP.

Belongs to the adenylate kinase family. Monomer.

The protein resides in the cytoplasm. It catalyses the reaction AMP + ATP = 2 ADP. It participates in purine metabolism; AMP biosynthesis via salvage pathway; AMP from ADP: step 1/1. In terms of biological role, catalyzes the reversible transfer of the terminal phosphate group between ATP and AMP. Plays an important role in cellular energy homeostasis and in adenine nucleotide metabolism. The polypeptide is Adenylate kinase (Buchnera aphidicola subsp. Baizongia pistaciae (strain Bp)).